The sequence spans 273 residues: uncharacterized protein (273 aa).

The AB hydrolase-1 domain maps to 29–131 (TLVCVHGFLS…VVLLCSSGYL (103 aa)). Residues Ser102 and His254 contribute to the active site.

Belongs to the DmpD/TodF/XylF esterase family.

This is an uncharacterized protein from Bacillus subtilis (strain 168).